The following is a 710-amino-acid chain: Nucleolar protein 9 (710 aa).

The segment covering 1-16 has biased composition (basic residues); the sequence is MGKTKSRGRRAEKKSK. Residues 1–43 are disordered; the sequence is MGKTKSRGRRAEKKSKKNEPEFNEDVSNLDSDATFANHESSST. Pumilio repeat units lie at residues 90–125, 126–161, 196–232, 280–321, 329–367, 369–405, 520–557, and 562–600; these read EAQGKELKLVTNQICSKLMERLILFANYNQLKKIFK, QFQNHFVSLAFHKYASHVLETLLVRSAALIEKELTQ, EFKPHLTTMIDHSYASHVLRLLILILAGKELPSSITS, GLDT…LIFA, SVEESFVEYLLSDSVGSHFLESIIKNDGARPKYIERLYK, YMKDRVLKLAKRSTTGVYIIQALLFKLKPVEVEYILD, ALPIERFVQMCFHGVFCHVVEKALIVEPEEPKTIQILR, and NIFQSQIVGLACNSYGSHIVDTLWNFTVLLPMYKDRIAS. The tract at residues 648-710 is disordered; it reads ETEDSTEKRA…KKQKLRGRRR (63 aa). Positions 652-680 are enriched in basic and acidic residues; sequence STEKRAKKPIELKMERLAEEKRRQEEMAE.

Belongs to the NOP9 family.

It localises to the nucleus. Its subcellular location is the nucleolus. In terms of biological role, RNA-binding nucleolar protein required for pre-rRNA processing. Involved in production of 18S rRNA and assembly of small ribosomal subunit. The protein is Nucleolar protein 9 (NOP9) of Candida dubliniensis (strain CD36 / ATCC MYA-646 / CBS 7987 / NCPF 3949 / NRRL Y-17841) (Yeast).